The sequence spans 235 residues: Phosphoribosylaminoimidazole-succinocarboxamide synthase (235 aa).

The protein belongs to the SAICAR synthetase family.

The enzyme catalyses 5-amino-1-(5-phospho-D-ribosyl)imidazole-4-carboxylate + L-aspartate + ATP = (2S)-2-[5-amino-1-(5-phospho-beta-D-ribosyl)imidazole-4-carboxamido]succinate + ADP + phosphate + 2 H(+). Its pathway is purine metabolism; IMP biosynthesis via de novo pathway; 5-amino-1-(5-phospho-D-ribosyl)imidazole-4-carboxamide from 5-amino-1-(5-phospho-D-ribosyl)imidazole-4-carboxylate: step 1/2. The polypeptide is Phosphoribosylaminoimidazole-succinocarboxamide synthase (Streptococcus sanguinis (strain SK36)).